Here is a 551-residue protein sequence, read N- to C-terminus: Hydroxylamine reductase (551 aa).

[2Fe-2S] cluster contacts are provided by C3, C6, C18, and C25. Hybrid [4Fe-2O-2S] cluster-binding residues include H249, E273, C317, C405, C433, C459, E493, and K495. C405 bears the Cysteine persulfide mark.

The protein belongs to the HCP family. [2Fe-2S] cluster is required as a cofactor. It depends on hybrid [4Fe-2O-2S] cluster as a cofactor.

The protein resides in the cytoplasm. It carries out the reaction A + NH4(+) + H2O = hydroxylamine + AH2 + H(+). Functionally, catalyzes the reduction of hydroxylamine to form NH(3) and H(2)O. This is Hydroxylamine reductase from Actinobacillus pleuropneumoniae serotype 7 (strain AP76).